The chain runs to 275 residues: Diaminopimelate epimerase (275 aa).

Substrate-binding residues include asparagine 12, glutamine 45, and asparagine 65. The active-site Proton donor is cysteine 74. Substrate contacts are provided by residues 75–76 (GN), asparagine 158, asparagine 191, and 209–210 (ER). Catalysis depends on cysteine 218, which acts as the Proton acceptor. 219–220 (GT) contacts substrate.

This sequence belongs to the diaminopimelate epimerase family. Homodimer.

It localises to the cytoplasm. The catalysed reaction is (2S,6S)-2,6-diaminopimelate = meso-2,6-diaminopimelate. It participates in amino-acid biosynthesis; L-lysine biosynthesis via DAP pathway; DL-2,6-diaminopimelate from LL-2,6-diaminopimelate: step 1/1. In terms of biological role, catalyzes the stereoinversion of LL-2,6-diaminopimelate (L,L-DAP) to meso-diaminopimelate (meso-DAP), a precursor of L-lysine and an essential component of the bacterial peptidoglycan. The chain is Diaminopimelate epimerase from Shewanella frigidimarina (strain NCIMB 400).